Here is a 721-residue protein sequence, read N- to C-terminus: ATP-dependent zinc metalloprotease FtsH (721 aa).

Residues 1 to 44 (MYFLKKIVNLFSSKIESEDNNVKKDDLTQPRKQSPEARKRRNRR) lie on the Cytoplasmic side of the membrane. The helical transmembrane segment at 45-65 (IIFWLIILLIIGTIIGVIIYF) threads the bilayer. Residues 66-190 (SVRKEYDNVI…AGIPSSGFNP (125 aa)) are Extracellular-facing. The helical transmembrane segment at 191–211 (QVIISPLISIIFFIIFLYIIL) threads the bilayer. Residues 212-721 (RVSKAQSDSL…KDKEKDQKSN (510 aa)) are Cytoplasmic-facing. 279-286 (GPPGTGKT) contributes to the ATP binding site. Histidine 498 lines the Zn(2+) pocket. Residue glutamate 499 is part of the active site. Histidine 502 and aspartate 577 together coordinate Zn(2+). Residues 686-721 (NKREASQKQANSSVEEAKVVDDEESIKDKEKDQKSN) form a disordered region. The segment covering 700–721 (EEAKVVDDEESIKDKEKDQKSN) has biased composition (basic and acidic residues).

In the central section; belongs to the AAA ATPase family. It in the C-terminal section; belongs to the peptidase M41 family. Homohexamer. It depends on Zn(2+) as a cofactor.

The protein resides in the cell membrane. Functionally, acts as a processive, ATP-dependent zinc metallopeptidase for both cytoplasmic and membrane proteins. Plays a role in the quality control of integral membrane proteins. This is ATP-dependent zinc metalloprotease FtsH from Ureaplasma parvum serovar 3 (strain ATCC 27815 / 27 / NCTC 11736).